A 474-amino-acid chain; its full sequence is Microtubule protein alp7 (474 aa).

Low complexity predominate over residues 1–20; the sequence is MSDIVSSSTDYSRRSPSSSS. Disordered stretches follow at residues 1–79, 93–114, and 164–223; these read MSDI…DTLN, KSFDFSGTPRPMHPISHPLSQH, and SLQT…NSTQ. Residue serine 17 is modified to Phosphoserine. Over residues 25-36 the composition is skewed to basic and acidic residues; it reads ETDHTGFHEKRQ. Residues 66–76 are compositionally biased toward polar residues; that stretch reads SKPNPQLNLKD. 2 stretches are compositionally biased toward polar residues: residues 177-189 and 201-223; these read SNGSFPRQTNTAP and RNSATPSTSQADIPTQYPINSTQ. 2 coiled-coil regions span residues 219 to 273 and 367 to 471; these read INST…QLRS and KISN…LNLE.

Interacts with alp14.

It is found in the nucleus. Its subcellular location is the cytoplasm. The protein localises to the cytoskeleton. The protein resides in the spindle. It localises to the chromosome. It is found in the centromere. Its subcellular location is the kinetochore. Required for bipolar spindle formation and proper chromosome segregation. Has an indirect role in connecting the kinetochores and the plus end of pole to chromosome microtubules by targeting alp14 to the spindle pole body. Involved in the emergence of large microtubule organizing centers (MTOC) in interphase cells. Attaches to the minus ends of microtubules and associates with the sites of microtubule attachment on the nuclear envelope. This leads to the stabilization of the microtubule bundles. The sequence is that of Microtubule protein alp7 (alp7) from Schizosaccharomyces pombe (strain 972 / ATCC 24843) (Fission yeast).